The primary structure comprises 139 residues: Large ribosomal subunit protein uL16 (139 aa).

Basic residues predominate over residues M1 to M20. The interval M1–K22 is disordered.

The protein belongs to the universal ribosomal protein uL16 family. Part of the 50S ribosomal subunit.

Functionally, binds 23S rRNA and is also seen to make contacts with the A and possibly P site tRNAs. The chain is Large ribosomal subunit protein uL16 from Streptomyces coelicolor (strain ATCC BAA-471 / A3(2) / M145).